The following is a 571-amino-acid chain: 5' exonuclease Apollo (571 aa).

Disordered stretches follow at residues 346–386 and 431–487; these read TSRP…TDRN and MDDN…SMHD. Basic and acidic residues-rich tracts occupy residues 367 to 386 and 453 to 468; these read NHDDMDSNDTEIDHDTTDRN and ECDHESPTKSSKEKSP. A compositionally biased stretch (polar residues) spans 470–487; that stretch reads MGSTNSGEMCSSMDSMHD. The short motif at 501–532 is the TBM element; sequence NPQSVTSAIPITLESEQFEHWLLENFTIPAEE.

It belongs to the DNA repair metallo-beta-lactamase (DRMBL) family. Interacts with terf2; the interaction is direct.

The protein localises to the chromosome. It localises to the telomere. The protein resides in the nucleus. It carries out the reaction a beta-lactam + H2O = a substituted beta-amino acid. Functionally, 5'-3' exonuclease that plays a central role in telomere maintenance and protection during S-phase. Participates in the protection of telomeres against non-homologous end-joining (NHEJ)-mediated repair, thereby ensuring that telomeres do not fuse. Plays a key role in telomeric loop (T loop) formation by being recruited by terf2 at the leading end telomeres and by processing leading-end telomeres immediately after their replication via its exonuclease activity: generates 3' single-stranded overhang at the leading end telomeres avoiding blunt leading-end telomeres that are vulnerable to end-joining reactions and expose the telomere end in a manner that activates the DNA repair pathways. Possesses beta-lactamase activity, catalyzing the hydrolysis of penicillin G and nitrocefin. Exhibits no activity towards other beta-lactam antibiotic classes including cephalosporins (cefotaxime) and carbapenems (imipenem). The polypeptide is 5' exonuclease Apollo (dclre1b) (Danio rerio (Zebrafish)).